The sequence spans 249 residues: Probable transcriptional regulatory protein GOX1679 (249 aa).

The protein belongs to the TACO1 family.

It localises to the cytoplasm. The chain is Probable transcriptional regulatory protein GOX1679 from Gluconobacter oxydans (strain 621H) (Gluconobacter suboxydans).